Here is a 417-residue protein sequence, read N- to C-terminus: WAT1-related protein At3g02690, chloroplastic (417 aa).

Residues 1 to 68 (MEWPWSAIAA…RRINGDSVVR (68 aa)) constitute a chloroplast transit peptide. Residues 67–92 (VRRSTTSNNSTEETESSSSSSSVDCV) are disordered. Low complexity predominate over residues 68–89 (RRSTTSNNSTEETESSSSSSSV). A run of 10 helical transmembrane segments spans residues 122–142 (FLEWTVLISPFFFWGTAMVAM), 152–172 (FFVAAFRLIPAGLLLVAFAVY), 183–203 (AWFSIALFALVDATCFQGFLA), 213–233 (LGSVIIDSQPLTVAVLASFLF), 237–257 (IGIVRAGGLLLGVAGLLLLEV), 269–289 (LWGSGEWWMLLAAQSMAIGTV), 301–321 (IMATGWHMVIGGLPLLAISVI), 339–359 (VIALLYTSIFGSAVSYGVYFY), 369–389 (LSSLTFLTPMFASIFGYLYLN), and 392–412 (FSSLQLVGAAVTLVAIYLVNF). 2 EamA domains span residues 133-255 (FFWG…LLLL) and 283-411 (SMAI…YLVN).

The protein belongs to the drug/metabolite transporter (DMT) superfamily. Plant drug/metabolite exporter (P-DME) (TC 2.A.7.4) family.

It localises to the plastid. The protein resides in the chloroplast membrane. The chain is WAT1-related protein At3g02690, chloroplastic from Arabidopsis thaliana (Mouse-ear cress).